The following is a 503-amino-acid chain: Arabinose import ATP-binding protein AraG 1 (503 aa).

ABC transporter domains are found at residues 5-240 (LRFD…MVGR) and 253-497 (LGDV…LPQG). 37-44 (GENGAGKS) serves as a coordination point for ATP.

The protein belongs to the ABC transporter superfamily. Arabinose importer (TC 3.A.1.2.2) family. The complex is composed of two ATP-binding proteins (AraG), two transmembrane proteins (AraH) and a solute-binding protein (AraF).

The protein localises to the cell inner membrane. The catalysed reaction is L-arabinose(out) + ATP + H2O = L-arabinose(in) + ADP + phosphate + H(+). Functionally, part of the ABC transporter complex AraFGH involved in arabinose import. Responsible for energy coupling to the transport system. This Burkholderia thailandensis (strain ATCC 700388 / DSM 13276 / CCUG 48851 / CIP 106301 / E264) protein is Arabinose import ATP-binding protein AraG 1.